Consider the following 684-residue polypeptide: Threonine--tRNA ligase (684 aa).

The TGS domain occupies 1 to 64 (MTAPNPSSLV…ESDTEVEPVA (64 aa)). The tract at residues 261–567 (DHRKLGVELD…LTEHYAGAFP (307 aa)) is catalytic. Residues Cys366, His417, and His544 each contribute to the Zn(2+) site.

It belongs to the class-II aminoacyl-tRNA synthetase family. Homodimer. Zn(2+) serves as cofactor.

The protein resides in the cytoplasm. It carries out the reaction tRNA(Thr) + L-threonine + ATP = L-threonyl-tRNA(Thr) + AMP + diphosphate + H(+). Functionally, catalyzes the attachment of threonine to tRNA(Thr) in a two-step reaction: L-threonine is first activated by ATP to form Thr-AMP and then transferred to the acceptor end of tRNA(Thr). Also edits incorrectly charged L-seryl-tRNA(Thr). This is Threonine--tRNA ligase from Mycobacteroides abscessus (strain ATCC 19977 / DSM 44196 / CCUG 20993 / CIP 104536 / JCM 13569 / NCTC 13031 / TMC 1543 / L948) (Mycobacterium abscessus).